Here is a 466-residue protein sequence, read N- to C-terminus: ATP synthase subunit beta (466 aa).

155–162 contacts ATP; that stretch reads GGAGVGKT.

Belongs to the ATPase alpha/beta chains family. F-type ATPases have 2 components, CF(1) - the catalytic core - and CF(0) - the membrane proton channel. CF(1) has five subunits: alpha(3), beta(3), gamma(1), delta(1), epsilon(1). CF(0) has three main subunits: a(1), b(2) and c(9-12). The alpha and beta chains form an alternating ring which encloses part of the gamma chain. CF(1) is attached to CF(0) by a central stalk formed by the gamma and epsilon chains, while a peripheral stalk is formed by the delta and b chains.

It localises to the cell inner membrane. The catalysed reaction is ATP + H2O + 4 H(+)(in) = ADP + phosphate + 5 H(+)(out). Its function is as follows. Produces ATP from ADP in the presence of a proton gradient across the membrane. The catalytic sites are hosted primarily by the beta subunits. The protein is ATP synthase subunit beta of Bordetella avium (strain 197N).